The chain runs to 286 residues: Bifunctional protein FolD (286 aa).

NADP(+) contacts are provided by residues 166 to 168 (GAS) and Ile-232.

The protein belongs to the tetrahydrofolate dehydrogenase/cyclohydrolase family. In terms of assembly, homodimer.

The catalysed reaction is (6R)-5,10-methylene-5,6,7,8-tetrahydrofolate + NADP(+) = (6R)-5,10-methenyltetrahydrofolate + NADPH. It catalyses the reaction (6R)-5,10-methenyltetrahydrofolate + H2O = (6R)-10-formyltetrahydrofolate + H(+). The protein operates within one-carbon metabolism; tetrahydrofolate interconversion. Functionally, catalyzes the oxidation of 5,10-methylenetetrahydrofolate to 5,10-methenyltetrahydrofolate and then the hydrolysis of 5,10-methenyltetrahydrofolate to 10-formyltetrahydrofolate. This Shewanella piezotolerans (strain WP3 / JCM 13877) protein is Bifunctional protein FolD.